The sequence spans 450 residues: Protein tweety homolog 1 (450 aa).

Residues 1 to 43 (MGAPPGYRPSAWVHLLHQLPRADFQLRPVPSGFAPRDQEYQQA) are Extracellular-facing. Residues 44 to 64 (LLLVAALAGLGLGLSLIFIAV) traverse the membrane as a helical segment. Residues 65–88 (YLIRFCCCRPPEPHGAKSPPPGGG) are Cytoplasmic-facing. The helical transmembrane segment at 89–109 (CVTWSCIAALLVGCAGIGIGF) threads the bilayer. The Extracellular portion of the chain corresponds to 110 to 214 (YGNSETSDGV…DVTFVEEYRW (105 aa)). N130 carries N-linked (GlcNAc...) asparagine glycosylation. A helical transmembrane segment spans residues 215–235 (LAYVLLLLLVLLVCLFTLLGL). The Cytoplasmic portion of the chain corresponds to 236–240 (AKQSK). A helical transmembrane segment spans residues 241–261 (WLVVVMTAMSLLVLVLSWGSM). Residues 262–390 (GLEAATAVGL…LRGLCEDALE (129 aa)) are Extracellular-facing. 2 cysteine pairs are disulfide-bonded: C275–C385 and C303–C370. N-linked (GlcNAc...) asparagine glycans are attached at residues N284 and N355. The helical transmembrane segment at 391 to 411 (GLLFLMLFSLLSAGALATTLC) threads the bilayer. Over 412–450 (SLPRAWALFPPSDDYDDTDDDDPFNPQESKRFVQWQSSI) the chain is Cytoplasmic. Positions 428 to 450 (DTDDDDPFNPQESKRFVQWQSSI) are disordered. At S440 the chain carries Phosphoserine.

This sequence belongs to the tweety family. As to quaternary structure, homotetramer; disulfide-linked. Homodimer. N-glycosylated. Contains high-mannose, hybrid and complex oligosaccharides. As to expression, expressed in the astrocytes (at protein level). Restricted mainly to neural tissues. Strongly expressed in brain and eye.

The protein localises to the cell membrane. It carries out the reaction chloride(in) = chloride(out). It catalyses the reaction L-glutamate(out) = L-glutamate(in). Inhibited by (4-[(2-butyl-6,7-dichloro-2- cyclopentyl-2,3-dihydro-1-oxo-1H-inden-5-yl)oxy]butanoic acid). Functionally, calcium-independent, swelling-dependent volume-regulated anion channel (VRAC-swell) which plays a pivotal role in the process of regulatory volume decrease (RVD) in the brain through the efflux of anions like chloride and organic osmolytes like glutamate. The chain is Protein tweety homolog 1 (Ttyh1) from Mus musculus (Mouse).